Reading from the N-terminus, the 229-residue chain is Allatostatin-A (229 aa).

Residues 1 to 18 form the signal peptide; that stretch reads MLSTSLPVCFLVIGAALC. Residues 19-48 constitute a propeptide that is removed on maturation; it reads APERMQNDPDPHDSTAQGSDNHSDHIAPLA. Residues 23 to 46 form a disordered region; it reads MQNDPDPHDSTAQGSDNHSDHIAP. Leu58 is modified (leucine amide). The propeptide occupies 62 to 80; that stretch reads AYSYVSEYKRLPVYNFGLG. The residue at position 90 (Leu90) is a Leucine amide. A propeptide spanning residues 94 to 130 is cleaved from the precursor; that stretch reads SVDEDQTNDDQQQIMNNDLDQAALAEFFDQYDDAGYE. Leu140 bears the Leucine amide mark. A propeptide spanning residues 144–152 is cleaved from the precursor; sequence FADDDTSEE. Leucine amide occurs at positions 162, 173, 184, 196, and 210. Residues 214-229 constitute a propeptide that is removed on maturation; that stretch reads SADDASTEDSDNYFDV.

Belongs to the allatostatin family. In terms of tissue distribution, allatostatin-A-1: Expressed in antennal lobe (AL), corpora cardiaca (CC), corpora allata (CA) and gnathal ganglion (GNG) (at protein level). Expression in AL and GNG detected in most animals, in CC and CA in some animals (at protein level). Allatostatin-A-3: Expressed in antennal lobe (AL), corpora cardiaca (CC), corpora allata (CA) and gnathal ganglion (GNG) (at protein level). Expression in AL detected in all animals, in GNG, CC and CA in most animals (at protein level). Allatostatin-A-4: Expressed in antennal lobe (AL), corpora cardiaca (CC), corpora allata (CA) and gnathal ganglion (GNG) in all animals (at protein level). Allatostatin-A-5: Expressed in antennal lobe (AL), corpora cardiaca (CC), corpora allata (CA) and gnathal ganglion (GNG) in all animals (at protein level). Allatostatin-A-6: Expressed in antennal lobe (AL) and gnathal ganglion (GNG) (at protein level). Expression in AL detected in some animals, in GNG in few animals (at protein level). Not expressed in corpora cardiaca (CC) and corpora allata (CA) (at protein level). Allatostatin-A-7: Expressed in antennal lobe (AL), corpora cardiaca (CC), corpora allata (CA) and gnathal ganglion (GNG) (at protein level). Expression in AL detected in all animals, in GNG, CC and CA in most animals (at protein level). Allatostatin-A-8: Expressed in antennal lobe (AL), corpora cardiaca (CC), corpora allata (CA) and gnathal ganglion (GNG) (at protein level). Expression in AL detected in all animals, in GNG, CC and CA in most animals (at protein level). Allatostatin-A-9: Expressed in antennal lobe (AL), corpora cardiaca (CC), corpora allata (CA) and gnathal ganglion (GNG) (at protein level). Expression in AL detected in all animals, in GNG in most animals and in CC and CA in some animals (at protein level).

Its subcellular location is the secreted. In terms of biological role, neuropeptide inhibitors of juvenile hormone synthesis and gut muscle contraction. The protein is Allatostatin-A of Agrotis ipsilon (Black cutworm moth).